A 154-amino-acid chain; its full sequence is Crossover junction endodeoxyribonuclease RuvC (154 aa).

Active-site residues include aspartate 7, glutamate 67, and aspartate 139. Residues aspartate 7, glutamate 67, and aspartate 139 each contribute to the Mg(2+) site.

This sequence belongs to the RuvC family. In terms of assembly, homodimer which binds Holliday junction (HJ) DNA. The HJ becomes 2-fold symmetrical on binding to RuvC with unstacked arms; it has a different conformation from HJ DNA in complex with RuvA. In the full resolvosome a probable DNA-RuvA(4)-RuvB(12)-RuvC(2) complex forms which resolves the HJ. The cofactor is Mg(2+).

It localises to the cytoplasm. The catalysed reaction is Endonucleolytic cleavage at a junction such as a reciprocal single-stranded crossover between two homologous DNA duplexes (Holliday junction).. Its function is as follows. The RuvA-RuvB-RuvC complex processes Holliday junction (HJ) DNA during genetic recombination and DNA repair. Endonuclease that resolves HJ intermediates. Cleaves cruciform DNA by making single-stranded nicks across the HJ at symmetrical positions within the homologous arms, yielding a 5'-phosphate and a 3'-hydroxyl group; requires a central core of homology in the junction. The consensus cleavage sequence is 5'-(A/T)TT(C/G)-3'. Cleavage occurs on the 3'-side of the TT dinucleotide at the point of strand exchange. HJ branch migration catalyzed by RuvA-RuvB allows RuvC to scan DNA until it finds its consensus sequence, where it cleaves and resolves the cruciform DNA. In Prochlorococcus marinus (strain MIT 9303), this protein is Crossover junction endodeoxyribonuclease RuvC.